Reading from the N-terminus, the 228-residue chain is RNA chaperone ProQ (228 aa).

The segment at 105–178 is disordered; that stretch reads EAKARVQAQR…REEQHTPVSD (74 aa). Composition is skewed to basic and acidic residues over residues 117–136 and 146–173; these read QQAK…DAPR and RRKE…EEQH.

This sequence belongs to the ProQ family.

Its subcellular location is the cytoplasm. In terms of biological role, RNA chaperone with significant RNA binding, RNA strand exchange and RNA duplexing activities. May regulate ProP activity through an RNA-based, post-transcriptional mechanism. The polypeptide is RNA chaperone ProQ (Citrobacter koseri (strain ATCC BAA-895 / CDC 4225-83 / SGSC4696)).